Consider the following 448-residue polypeptide: Methionine aminopeptidase 2 (448 aa).

Residues 1-47 (MTSSVDKVSQKVADVKLGSSKSTKNNKSKGKGKSNKNQVVEDDDEDD) are disordered. Basic residues predominate over residues 24-34 (KNNKSKGKGKS). Histidine 198 is a substrate binding site. 3 residues coordinate a divalent metal cation: aspartate 218, aspartate 229, and histidine 298. Residue histidine 306 participates in substrate binding. A divalent metal cation contacts are provided by glutamate 331 and glutamate 429.

It belongs to the peptidase M24A family. Methionine aminopeptidase eukaryotic type 2 subfamily. Requires Co(2+) as cofactor. Zn(2+) serves as cofactor. It depends on Mn(2+) as a cofactor. The cofactor is Fe(2+).

The protein resides in the cytoplasm. It carries out the reaction Release of N-terminal amino acids, preferentially methionine, from peptides and arylamides.. Functionally, cotranslationally removes the N-terminal methionine from nascent proteins. The N-terminal methionine is often cleaved when the second residue in the primary sequence is small and uncharged (Met-Ala-, Cys, Gly, Pro, Ser, Thr, or Val). In Komagataella phaffii (strain GS115 / ATCC 20864) (Yeast), this protein is Methionine aminopeptidase 2.